We begin with the raw amino-acid sequence, 717 residues long: Polyribonucleotide nucleotidyltransferase (717 aa).

Residues Asp496 and Asp502 each coordinate Mg(2+). One can recognise a KH domain in the interval 563–622 (PRLLTIKIDPDLIGLVIGPGGKTVKGITEQTGTKIDIDDDGTVTISSTDGEQAEKAKRLI). Positions 632–700 (GEVYLGRVTR…SKGRLNLTRL (69 aa)) constitute an S1 motif domain.

Belongs to the polyribonucleotide nucleotidyltransferase family. Requires Mg(2+) as cofactor.

It is found in the cytoplasm. It catalyses the reaction RNA(n+1) + phosphate = RNA(n) + a ribonucleoside 5'-diphosphate. Functionally, involved in mRNA degradation. Catalyzes the phosphorolysis of single-stranded polyribonucleotides processively in the 3'- to 5'-direction. In Microcystis aeruginosa (strain NIES-843 / IAM M-2473), this protein is Polyribonucleotide nucleotidyltransferase.